Here is a 411-residue protein sequence, read N- to C-terminus: Isocitrate dehydrogenase [NADP] peroxisomal (411 aa).

Residues 78–80 (TIT) and Arg85 contribute to the NADP(+) site. Thr80 contacts substrate. Substrate contacts are provided by residues 97-103 (SPNGTLR), Arg112, and Arg135. Residue Asp254 coordinates Mn(2+). Lys262 contacts NADP(+). Asp277 provides a ligand contact to Mn(2+). Residues 312–317 (GTVTRH) and Asn330 contribute to the NADP(+) site.

Belongs to the isocitrate and isopropylmalate dehydrogenases family. It depends on Mg(2+) as a cofactor. Mn(2+) serves as cofactor.

Its subcellular location is the peroxisome. It catalyses the reaction D-threo-isocitrate + NADP(+) = 2-oxoglutarate + CO2 + NADPH. Its function is as follows. May play a role in N-alkane metabolism, glutamate synthesis, and/or NADPH generation in the peroxisomes. The protein is Isocitrate dehydrogenase [NADP] peroxisomal (IDP2) of Candida tropicalis (Yeast).